The sequence spans 88 residues: Large ribosomal subunit protein bL27 (88 aa).

Positions 1 to 13 (MATKKGASSSSNG) are enriched in polar residues. The tract at residues 1-25 (MATKKGASSSSNGRDSEAKRLGVKR) is disordered.

The protein belongs to the bacterial ribosomal protein bL27 family.

In Corynebacterium efficiens (strain DSM 44549 / YS-314 / AJ 12310 / JCM 11189 / NBRC 100395), this protein is Large ribosomal subunit protein bL27.